We begin with the raw amino-acid sequence, 231 residues long: Orotate phosphoribosyltransferase (231 aa).

Residues K27, 79–80, R106, K107, K110, H112, and 133–141 contribute to the 5-phospho-alpha-D-ribose 1-diphosphate site; these read YK and DDVMTAGTA. Positions 137 and 166 each coordinate orotate.

The protein belongs to the purine/pyrimidine phosphoribosyltransferase family. PyrE subfamily. As to quaternary structure, homodimer. Requires Mg(2+) as cofactor.

It catalyses the reaction orotidine 5'-phosphate + diphosphate = orotate + 5-phospho-alpha-D-ribose 1-diphosphate. The protein operates within pyrimidine metabolism; UMP biosynthesis via de novo pathway; UMP from orotate: step 1/2. In terms of biological role, catalyzes the transfer of a ribosyl phosphate group from 5-phosphoribose 1-diphosphate to orotate, leading to the formation of orotidine monophosphate (OMP). The polypeptide is Orotate phosphoribosyltransferase (Bifidobacterium longum (strain NCC 2705)).